Reading from the N-terminus, the 540-residue chain is RNA exonuclease 3 (540 aa).

The C3H1-type zinc finger occupies 7 to 34 (QFKHIVCPFLRTGRKCQSRNCFFSHDFQ). Positions 382–529 (HCALDCELCY…EDAVSALQLV (148 aa)) constitute an Exonuclease domain.

This sequence belongs to the REXO1/REXO3 family.

The protein localises to the cytoplasm. The protein resides in the nucleus. Its function is as follows. 3' to 5' exoribonuclease required for proper 3' end maturation of MRP RNA and of the U5L snRNA. This Schizosaccharomyces pombe (strain 972 / ATCC 24843) (Fission yeast) protein is RNA exonuclease 3 (rex3).